The sequence spans 506 residues: Tabersonine 16-hydroxylase 1 (506 aa).

A helical transmembrane segment spans residues 1–21 (MEFYYFLYLAFLLFCFILSKT). C447 is a heme binding site.

This sequence belongs to the cytochrome P450 family. Heme is required as a cofactor. Predominantly expressed in young leaves of mature plants. Low expression in roots and flowers, but not detected in stems and old leaves. Found predominantly in leaf epidermis. Barely detected in roots, internodes, young and mature leaves, and flower buds, but relatively abundant in fully developed flowers. Not detected in leaf epidermal cells.

The protein resides in the endoplasmic reticulum membrane. The catalysed reaction is (-)-tabersonine + reduced [NADPH--hemoprotein reductase] + O2 = 16-hydroxytabersonine + oxidized [NADPH--hemoprotein reductase] + H2O + H(+). It participates in alkaloid biosynthesis; vindoline biosynthesis. In terms of biological role, involved in the flower biosynthesis of vindoline, a precursor of vinblastine and vincristine. Hydroxylates specifically tabersonine, 2,3-dihydrotabersonine and 2,3-dihydro-3-hydroxytabersonine, but has no activity with naringenin, tryptamine, secologanin, strictosidine, ajmalicine, vindoline and catharanthine. This is Tabersonine 16-hydroxylase 1 from Catharanthus roseus (Madagascar periwinkle).